We begin with the raw amino-acid sequence, 101 residues long: MAGQKIRIRLKAYDHEAIDASAKKIVETVTRTGARVVGPVPLPTEKNVYCVIRSPHKDKDSREHFEMRTHKRLIDILDPTPKTVDALMRIDLPASVDVNIQ.

The protein belongs to the universal ribosomal protein uS10 family. In terms of assembly, part of the 30S ribosomal subunit.

In terms of biological role, involved in the binding of tRNA to the ribosomes. This chain is Small ribosomal subunit protein uS10, found in Corynebacterium urealyticum (strain ATCC 43042 / DSM 7109).